A 305-amino-acid chain; its full sequence is Ribonuclease BN (305 aa).

Residues His-64, His-66, Asp-68, His-69, His-141, Asp-212, and His-270 each coordinate Zn(2+). Asp-68 serves as the catalytic Proton acceptor.

Belongs to the RNase Z family. RNase BN subfamily. In terms of assembly, homodimer. Requires Zn(2+) as cofactor.

Zinc phosphodiesterase, which has both exoribonuclease and endoribonuclease activities. The polypeptide is Ribonuclease BN (Salmonella paratyphi C (strain RKS4594)).